We begin with the raw amino-acid sequence, 570 residues long: Protein HEATR9 (570 aa).

This chain is Protein HEATR9 (HEATR9), found in Homo sapiens (Human).